Consider the following 156-residue polypeptide: ATP synthase subunit b (156 aa).

The chain crosses the membrane as a helical span at residues 7–29; it reads LFAQMVVFLVLAWFTMKFVWPPL.

This sequence belongs to the ATPase B chain family. In terms of assembly, F-type ATPases have 2 components, F(1) - the catalytic core - and F(0) - the membrane proton channel. F(1) has five subunits: alpha(3), beta(3), gamma(1), delta(1), epsilon(1). F(0) has three main subunits: a(1), b(2) and c(10-14). The alpha and beta chains form an alternating ring which encloses part of the gamma chain. F(1) is attached to F(0) by a central stalk formed by the gamma and epsilon chains, while a peripheral stalk is formed by the delta and b chains.

The protein resides in the cell inner membrane. In terms of biological role, f(1)F(0) ATP synthase produces ATP from ADP in the presence of a proton or sodium gradient. F-type ATPases consist of two structural domains, F(1) containing the extramembraneous catalytic core and F(0) containing the membrane proton channel, linked together by a central stalk and a peripheral stalk. During catalysis, ATP synthesis in the catalytic domain of F(1) is coupled via a rotary mechanism of the central stalk subunits to proton translocation. Functionally, component of the F(0) channel, it forms part of the peripheral stalk, linking F(1) to F(0). The sequence is that of ATP synthase subunit b from Burkholderia lata (strain ATCC 17760 / DSM 23089 / LMG 22485 / NCIMB 9086 / R18194 / 383).